The primary structure comprises 116 residues: Phosphoribosyl-AMP cyclohydrolase (116 aa).

Asp85 serves as a coordination point for Mg(2+). Cys86 serves as a coordination point for Zn(2+). Mg(2+)-binding residues include Asp87 and Asp89. Zn(2+) contacts are provided by Cys102 and Cys109.

The protein belongs to the PRA-CH family. As to quaternary structure, homodimer. It depends on Mg(2+) as a cofactor. Zn(2+) is required as a cofactor.

The protein localises to the cytoplasm. The catalysed reaction is 1-(5-phospho-beta-D-ribosyl)-5'-AMP + H2O = 1-(5-phospho-beta-D-ribosyl)-5-[(5-phospho-beta-D-ribosylamino)methylideneamino]imidazole-4-carboxamide. Its pathway is amino-acid biosynthesis; L-histidine biosynthesis; L-histidine from 5-phospho-alpha-D-ribose 1-diphosphate: step 3/9. Functionally, catalyzes the hydrolysis of the adenine ring of phosphoribosyl-AMP. The chain is Phosphoribosyl-AMP cyclohydrolase from Corynebacterium diphtheriae (strain ATCC 700971 / NCTC 13129 / Biotype gravis).